The sequence spans 374 residues: Peptide chain release factor 2 (374 aa).

The residue at position 254 (glutamine 254) is an N5-methylglutamine.

Belongs to the prokaryotic/mitochondrial release factor family. In terms of processing, methylated by PrmC. Methylation increases the termination efficiency of RF2.

The protein resides in the cytoplasm. Functionally, peptide chain release factor 2 directs the termination of translation in response to the peptide chain termination codons UGA and UAA. The sequence is that of Peptide chain release factor 2 from Renibacterium salmoninarum (strain ATCC 33209 / DSM 20767 / JCM 11484 / NBRC 15589 / NCIMB 2235).